Reading from the N-terminus, the 36-residue chain is DNA binding protein ORF8 (36 aa).

It belongs to the microviridae J protein family.

The protein localises to the virion. It localises to the host cytoplasm. In terms of biological role, mediates ssDNA packaging into virion, it locates to the internal surface of the capsid. Additionally, plays a role in viral attachment to the host cell. This Chlamydia phage 1 (Bacteriophage Chp1) protein is DNA binding protein ORF8.